The chain runs to 325 residues: GMP reductase (325 aa).

C174 functions as the Thioimidate intermediate in the catalytic mechanism. 203-226 (IIADGGIRTHGDIAKSVRFGATMV) serves as a coordination point for NADP(+).

Belongs to the IMPDH/GMPR family. GuaC type 2 subfamily.

The enzyme catalyses IMP + NH4(+) + NADP(+) = GMP + NADPH + 2 H(+). Functionally, catalyzes the irreversible NADPH-dependent deamination of GMP to IMP. It functions in the conversion of nucleobase, nucleoside and nucleotide derivatives of G to A nucleotides, and in maintaining the intracellular balance of A and G nucleotides. The sequence is that of GMP reductase from Enterococcus faecalis (strain ATCC 700802 / V583).